A 96-amino-acid chain; its full sequence is Large ribosomal subunit protein bL21 (96 aa).

This sequence belongs to the bacterial ribosomal protein bL21 family. Part of the 50S ribosomal subunit. Contacts protein L20.

Its function is as follows. This protein binds to 23S rRNA in the presence of protein L20. In Chlorobium chlorochromatii (strain CaD3), this protein is Large ribosomal subunit protein bL21.